We begin with the raw amino-acid sequence, 705 residues long: uncharacterized protein (705 aa).

Catalysis depends on charge relay system residues Ser-554 and His-676.

The protein belongs to the peptidase S9A family.

This is an uncharacterized protein from Sinorhizobium fredii (strain NBRC 101917 / NGR234).